The following is a 631-amino-acid chain: Phosphomethylpyrimidine synthase (631 aa).

Substrate-binding positions include asparagine 239, methionine 268, tyrosine 297, histidine 333, 353–355 (SRG), 394–397 (DGLR), and glutamate 433. A Zn(2+)-binding site is contributed by histidine 437. Tyrosine 460 contributes to the substrate binding site. Residue histidine 501 participates in Zn(2+) binding. [4Fe-4S] cluster-binding residues include cysteine 581, cysteine 584, and cysteine 589.

It belongs to the ThiC family. In terms of assembly, homodimer. It depends on [4Fe-4S] cluster as a cofactor.

The catalysed reaction is 5-amino-1-(5-phospho-beta-D-ribosyl)imidazole + S-adenosyl-L-methionine = 4-amino-2-methyl-5-(phosphooxymethyl)pyrimidine + CO + 5'-deoxyadenosine + formate + L-methionine + 3 H(+). It participates in cofactor biosynthesis; thiamine diphosphate biosynthesis. In terms of biological role, catalyzes the synthesis of the hydroxymethylpyrimidine phosphate (HMP-P) moiety of thiamine from aminoimidazole ribotide (AIR) in a radical S-adenosyl-L-methionine (SAM)-dependent reaction. The polypeptide is Phosphomethylpyrimidine synthase (Salmonella paratyphi A (strain AKU_12601)).